The chain runs to 296 residues: Phosphatidylglycerol--prolipoprotein diacylglyceryl transferase (296 aa).

7 helical membrane-spanning segments follow: residues 17 to 37 (LAVR…IVVG), 59 to 79 (MMFY…VLFY), 97 to 117 (GGMS…LFAW), 129 to 149 (FVAP…FING), 203 to 223 (PSQL…LFFF), 230 to 250 (LGAV…TVEF), and 265 to 285 (LSMG…LLVW). Arg142 lines the a 1,2-diacyl-sn-glycero-3-phospho-(1'-sn-glycerol) pocket.

Belongs to the Lgt family.

The protein localises to the cell inner membrane. It carries out the reaction L-cysteinyl-[prolipoprotein] + a 1,2-diacyl-sn-glycero-3-phospho-(1'-sn-glycerol) = an S-1,2-diacyl-sn-glyceryl-L-cysteinyl-[prolipoprotein] + sn-glycerol 1-phosphate + H(+). It participates in protein modification; lipoprotein biosynthesis (diacylglyceryl transfer). Catalyzes the transfer of the diacylglyceryl group from phosphatidylglycerol to the sulfhydryl group of the N-terminal cysteine of a prolipoprotein, the first step in the formation of mature lipoproteins. This Burkholderia ambifaria (strain MC40-6) protein is Phosphatidylglycerol--prolipoprotein diacylglyceryl transferase.